We begin with the raw amino-acid sequence, 465 residues long: Kynureninase (465 aa).

Methionine 1 bears the N-acetylmethionine mark. Pyridoxal 5'-phosphate is bound by residues leucine 137, threonine 138, 165–168, serine 221, aspartate 250, histidine 253, and tyrosine 275; that span reads FPSD. Lysine 276 is modified (N6-(pyridoxal phosphate)lysine). Pyridoxal 5'-phosphate contacts are provided by tryptophan 305 and asparagine 333.

Belongs to the kynureninase family. In terms of assembly, homodimer. Pyridoxal 5'-phosphate is required as a cofactor. In terms of tissue distribution, expressed in all tissues tested (heart, brain placenta, lung, liver, skeletal muscle, kidney and pancreas). Highest levels found in placenta, liver and lung. Expressed in all brain regions.

The protein localises to the cytoplasm. It localises to the cytosol. The enzyme catalyses L-kynurenine + H2O = anthranilate + L-alanine + H(+). It catalyses the reaction 3-hydroxy-L-kynurenine + H2O = 3-hydroxyanthranilate + L-alanine + H(+). The protein operates within amino-acid degradation; L-kynurenine degradation; L-alanine and anthranilate from L-kynurenine: step 1/1. It participates in cofactor biosynthesis; NAD(+) biosynthesis; quinolinate from L-kynurenine: step 2/3. Its activity is regulated as follows. Inhibited by o-methoxybenzoylalanine (OMBA). Catalyzes the cleavage of L-kynurenine (L-Kyn) and L-3-hydroxykynurenine (L-3OHKyn) into anthranilic acid (AA) and 3-hydroxyanthranilic acid (3-OHAA), respectively. Has a preference for the L-3-hydroxy form. Also has cysteine-conjugate-beta-lyase activity. The protein is Kynureninase of Homo sapiens (Human).